Here is a 386-residue protein sequence, read N- to C-terminus: Bifunctional desaturase/conjugase FADX (386 aa).

The tract at residues 1–28 (MGAGGRMSVAPNNSKCEKKESRSVKRVP) is disordered. 2 helical membrane passes run 65–85 (LSFI…SPIT) and 87–107 (IAWP…WVLG). Residues 108–112 (HECGH) carry the Histidine box-1 motif. The Histidine box-2 signature appears at 144–148 (HRRHH). Transmembrane regions (helical) follow at residues 182-202 (ALTL…FNVS), 228-248 (IYIS…IAMA), and 250-270 (GLAW…ALVV). The short motif at 318–322 (HVIHH) is the Histidine box-3 element.

This sequence belongs to the fatty acid desaturase type 1 family. In terms of tissue distribution, expressed exclusively in developing seeds.

The protein resides in the endoplasmic reticulum membrane. The catalysed reaction is a (9Z,12Z)-octadecadienoyl-containing glycerolipid + 2 Fe(II)-[cytochrome b5] + O2 + 2 H(+) = a (9Z,11E,13E)-octadecatrienoyl-containing glycerolipid + 2 Fe(III)-[cytochrome b5] + 2 H2O. It catalyses the reaction (9Z,12Z,15Z)-octadecatrienoyl-containing glycerolipid + 2 Fe(II)-[cytochrome b5] + O2 + 2 H(+) = a (9Z,11E,13E,15Z)-octadecatetraenoyl-containing glycerolipid + 2 Fe(III)-[cytochrome b5] + 2 H2O. It carries out the reaction a (9Z)-octadecenoyl-containing glycerolipid + 2 Fe(II)-[cytochrome b5] + O2 + 2 H(+) = a (9Z,12E)-octadecadienoyl-containing glycerolipid + 2 Fe(III)-[cytochrome b5] + 2 H2O. The enzyme catalyses a (9Z)-hexadecenoyl-containing glycerolipid + 2 Fe(II)-[cytochrome b5] + O2 + 2 H(+) = a (9Z,12E)-hexadecadienoyl-containing glycerolipid + 2 Fe(III)-[cytochrome b5] + 2 H2O. Its pathway is lipid metabolism; polyunsaturated fatty acid biosynthesis. Functionally, converts linoleic acid to alpha-eleostearic acid (18:3(9Z,11E,13E)) and alpha-linolenic acid to alpha-parinaric acid (18:4(9Z,11E,13E,15Z)). Converts a single cis double bond at carbon 12 to two conjugated trans bonds at positions 11 and 13. Can also act as a 12(E) desaturase when acting on the monounsaturated fatty acids oleate and palmitoleate, stereoselectively introducing a trans double bond. The protein is Bifunctional desaturase/conjugase FADX of Vernicia fordii (Tung).